Reading from the N-terminus, the 339-residue chain is Uracil nucleotide/cysteinyl leukotriene receptor (339 aa).

Residues 1–36 are Extracellular-facing; that stretch reads MDGLETALPSLTDNASLAYSEQCGQETPLENMLFAC. N-linked (GlcNAc...) asparagine glycosylation occurs at Asn14. Residues 37–57 traverse the membrane as a helical segment; the sequence is FYLLDFILAFVGNALALWLFI. Residues 58-64 are Cytoplasmic-facing; sequence WDHKSGT. A helical membrane pass occupies residues 65 to 85; the sequence is PANVFLMHLAVADLSCVLVLP. Residues 86-105 lie on the Extracellular side of the membrane; that stretch reads TRLVYHFSGNHWPFGEIPCR. Cysteines 104 and 181 form a disulfide. Residues 106-126 form a helical membrane-spanning segment; it reads LTGFLFYLNMYASIYFLTCIS. Topologically, residues 127-147 are cytoplasmic; the sequence is ADRFLAIVHPVKSLKLRRPLY. A helical transmembrane segment spans residues 148 to 168; the sequence is AHLACAFLWIVVAVAMAPLLV. Topologically, residues 169-195 are extracellular; the sequence is SPQTVQTNHTVVCLQLYREKASHHALA. Residue Asn176 is glycosylated (N-linked (GlcNAc...) asparagine). A helical transmembrane segment spans residues 196 to 216; the sequence is SLAVAFTFPFITTVTCYLLII. The Cytoplasmic portion of the chain corresponds to 217–232; it reads RSLRQGPRIEKHLKNK. The helical transmembrane segment at 233-253 threads the bilayer; sequence AVRMIAMVLAIFLICFVPYHI. Residues 254 to 280 are Extracellular-facing; that stretch reads HRSVYVLHYRGGGTSCSAQRALALGNR. Residues 281 to 301 traverse the membrane as a helical segment; sequence ITSCLTSLNGALDPVMYFFVA. The Cytoplasmic segment spans residues 302–339; sequence EKFRHALCNLLCSKRLTGPPPSFEGKTNESSLSARSEL.

It belongs to the G-protein coupled receptor 1 family. In terms of tissue distribution, expressed in brain, kidney, and heart. Highest level in brain.

The protein resides in the cell membrane. Its function is as follows. Dual specificity receptor for uracil nucleotides and cysteinyl leukotrienes (CysLTs). Signals through G(i) and inhibition of adenylyl cyclase. May mediate brain damage by nucleotides and CysLTs following ischemia. This chain is Uracil nucleotide/cysteinyl leukotriene receptor, found in Rattus norvegicus (Rat).